The chain runs to 266 residues: Putative carbamate hydrolase RutD (266 aa).

This sequence belongs to the AB hydrolase superfamily. Hydrolase RutD family.

It catalyses the reaction carbamate + 2 H(+) = NH4(+) + CO2. Its function is as follows. Involved in pyrimidine catabolism. May facilitate the hydrolysis of carbamate, a reaction that can also occur spontaneously. The chain is Putative carbamate hydrolase RutD from Escherichia coli O139:H28 (strain E24377A / ETEC).